The chain runs to 1084 residues: Autophagy-related protein 11 (1084 aa).

Coiled-coil stretches lie at residues 585–739 and 847–879; these read VQNL…LTES and VIRRFNDIESLAKKLRKENKNKKILLQKYTNDK. Disordered stretches follow at residues 925–961 and 973–1007; these read SMIPPRVIPNRVEPASNTNNSNPSSVPEDMGSPNMNR and NIGSNNSNNNYVNTGNANGNNKPETNIDTTSSTNA. Low complexity-rich tracts occupy residues 940 to 949 and 973 to 993; these read SNTNNSNPSS and NIGSNNSNNNYVNTGNANGNN. A compositionally biased stretch (polar residues) spans 994 to 1007; sequence KPETNIDTTSSTNA.

It belongs to the ATG11 family. Homodimer and potential homooligomers. Interacts with ATG1 kinase and the ATG19 and ATG34 cargo protein transporters. Interacts with ATG9, ATG17 and ATG20.

Its subcellular location is the preautophagosomal structure membrane. It localises to the vacuole membrane. Its function is as follows. Involved in cytoplasm to vacuole transport (Cvt), pexophagy, mitophagy and nucleophagy. Recruits mitochondria for their selective degradation via autophagy (mitophagy) during starvation, through its interaction with ATG32. Works as scaffold proteins that recruit ATG proteins to the pre-autophagosome (PAS), the site of vesicle/autophagosome formation. Required for ATG9 anterograde transport from the mitochondria to the PAS. Also recruits the ATG19-prAPE1 complex to the PAS. Required for the Cvt vesicles completion. The chain is Autophagy-related protein 11 from Kluyveromyces marxianus (strain DMKU3-1042 / BCC 29191 / NBRC 104275) (Yeast).